A 79-amino-acid polypeptide reads, in one-letter code: Acyl carrier protein (79 aa).

Residues 2-77 (ESIEQRVKKI…QAVDYINSHG (76 aa)) form the Carrier domain. Ser37 is subject to O-(pantetheine 4'-phosphoryl)serine.

It belongs to the acyl carrier protein (ACP) family. Post-translationally, 4'-phosphopantetheine is transferred from CoA to a specific serine of apo-ACP by AcpS. This modification is essential for activity because fatty acids are bound in thioester linkage to the sulfhydryl of the prosthetic group.

Its subcellular location is the cytoplasm. The protein operates within lipid metabolism; fatty acid biosynthesis. Carrier of the growing fatty acid chain in fatty acid biosynthesis. This Bordetella parapertussis (strain 12822 / ATCC BAA-587 / NCTC 13253) protein is Acyl carrier protein.